The following is an 827-amino-acid chain: uncharacterized protein (827 aa).

The PAS 1 domain maps to 12–82 (FDADFEAILN…DMDIGVLSTG (71 aa)). Positions 212–264 (LDVEFRLAAAEGGYSWYRSRAATRRAEDGSILRWYGTVEDIDDRRKMFEALKE) constitute a PAC 1 domain. In terms of domain architecture, PAS 2 spans 265–335 (SEARFRAIAD…RVFYQAFDLR (71 aa)). The PAC 2 domain maps to 338 to 390 (VRMEYRLKRAGGGSAWVIDIGQPRFASDGTFLGFVGIALDITERRNAEQERLL). The GGDEF domain occupies 428 to 561 (TRLAILCLDL…GGGTIVQYEP (134 aa)). One can recognise an EAL domain in the interval 570-820 (RQRMKVSLRH…QAMALLKSRS (251 aa)).

This is an uncharacterized protein from Sinorhizobium fredii (strain NBRC 101917 / NGR234).